The chain runs to 351 residues: L-threonine 3-dehydrogenase (351 aa).

C39 serves as a coordination point for Zn(2+). Residues T41 and H44 each act as charge relay system in the active site. H64, E65, C94, C97, C100, and C108 together coordinate Zn(2+). NAD(+)-binding positions include I176, D196, R201, 271 to 273 (LGI), and 295 to 296 (IY).

It belongs to the zinc-containing alcohol dehydrogenase family. As to quaternary structure, homotetramer. Requires Zn(2+) as cofactor.

The protein resides in the cytoplasm. The catalysed reaction is L-threonine + NAD(+) = (2S)-2-amino-3-oxobutanoate + NADH + H(+). The protein operates within amino-acid degradation; L-threonine degradation via oxydo-reductase pathway; glycine from L-threonine: step 1/2. In terms of biological role, catalyzes the NAD(+)-dependent oxidation of L-threonine to 2-amino-3-ketobutyrate. This Francisella tularensis subsp. tularensis (strain SCHU S4 / Schu 4) protein is L-threonine 3-dehydrogenase.